Here is a 106-residue protein sequence, read N- to C-terminus: NADH-quinone oxidoreductase subunit K (106 aa).

3 helical membrane-spanning segments follow: residues 8 to 28 (IGIE…IFGV), 35 to 55 (IIMF…FVAF), and 66 to 86 (VFVF…LAIL).

It belongs to the complex I subunit 4L family. NDH-1 is composed of 14 different subunits. Subunits NuoA, H, J, K, L, M, N constitute the membrane sector of the complex.

It localises to the cell inner membrane. It carries out the reaction a quinone + NADH + 5 H(+)(in) = a quinol + NAD(+) + 4 H(+)(out). Its function is as follows. NDH-1 shuttles electrons from NADH, via FMN and iron-sulfur (Fe-S) centers, to quinones in the respiratory chain. The immediate electron acceptor for the enzyme in this species is believed to be a menaquinone. Couples the redox reaction to proton translocation (for every two electrons transferred, four hydrogen ions are translocated across the cytoplasmic membrane), and thus conserves the redox energy in a proton gradient. The protein is NADH-quinone oxidoreductase subunit K of Flavobacterium psychrophilum (strain ATCC 49511 / DSM 21280 / CIP 103535 / JIP02/86).